A 380-amino-acid chain; its full sequence is Cytochrome b (380 aa).

A run of 4 helical transmembrane segments spans residues 33–53, 77–98, 113–133, and 178–198; these read FGSL…FLAM, WLLR…YLHI, WNIG…GYVL, and FFTF…LHLL. Residues H83 and H97 each contribute to the heme b site. Heme b contacts are provided by H182 and H196. H201 is an a ubiquinone binding site. 4 helical membrane passes run 226–246, 288–308, 320–340, and 347–367; these read YKDL…ALLN, LGGV…PTLH, SSQT…WIGG, and FIII…FFIP.

Belongs to the cytochrome b family. In terms of assembly, the cytochrome bc1 complex contains 3 respiratory subunits (MT-CYB, CYC1 and UQCRFS1), 2 core proteins (UQCRC1 and UQCRC2) and probably 6 low-molecular weight proteins. Heme b is required as a cofactor.

It localises to the mitochondrion inner membrane. Its function is as follows. Component of the ubiquinol-cytochrome c reductase complex (complex III or cytochrome b-c1 complex) that is part of the mitochondrial respiratory chain. The b-c1 complex mediates electron transfer from ubiquinol to cytochrome c. Contributes to the generation of a proton gradient across the mitochondrial membrane that is then used for ATP synthesis. The chain is Cytochrome b (mt-cyb) from Lepisosteus oculatus (Spotted gar).